A 626-amino-acid chain; its full sequence is DNA (cytosine-5)-methyltransferase DRM2 (626 aa).

2 UBA domains span residues 59–101 and 109–150; these read GFSD…ISKY and SSKS…LLSC. Positions 160-187 are enriched in acidic residues; it reads VEEEDGIDWSSSDDDTNYTDMLNSDDEK. 2 disordered regions span residues 160–196 and 245–282; these read VEEE…ENGS and TEHE…PNPM. One can recognise a UBA 3 domain in the interval 190–232; the sequence is NSNENGSKIRSLVKMGFSELEASLAVERCGENVDIAELTDFLC. Over residues 262–276 the composition is skewed to basic and acidic residues; the sequence is ESKGEPRSSVDDEPI. The SAM-dependent MTase DRM-type domain occupies 295-626; it reads THRSLPELAR…EVVRARMRGS (332 aa).

The protein belongs to the class I-like SAM-binding methyltransferase superfamily. DRM-methyltransferase family. In terms of assembly, interacts with RDM1. In terms of tissue distribution, expressed in roots, inflorescences and at lower levels in leaves.

It is found in the nucleus. Its subcellular location is the nucleoplasm. It carries out the reaction a 2'-deoxycytidine in DNA + S-adenosyl-L-methionine = a 5-methyl-2'-deoxycytidine in DNA + S-adenosyl-L-homocysteine + H(+). Its function is as follows. Involved in de novo DNA methylation. Controls asymmetric and CpNpG methylation. Required for FWA gene silencing but not for the maintenance of SUP gene silencing. Functionally redundant to CMT3 to maintain non-CpG methylation. Involved in RNA-directed DNA methylation (RdDM). Acts as major DNA methyltransferase in the RdDM pathway, and is essential for RNA-directed de novo DNA methylation of cytosines in all sequence contexts. Associates with long non-coding RNA (lncRNA) produced by RNA polymerase V (Pol V). This association is dependent on AGO4 and IDN2, and results in DNA methylation of RdDM target loci. The polypeptide is DNA (cytosine-5)-methyltransferase DRM2 (DRM2) (Arabidopsis thaliana (Mouse-ear cress)).